Here is a 290-residue protein sequence, read N- to C-terminus: ATP synthase gamma chain (290 aa).

The protein belongs to the ATPase gamma chain family. As to quaternary structure, F-type ATPases have 2 components, CF(1) - the catalytic core - and CF(0) - the membrane proton channel. CF(1) has five subunits: alpha(3), beta(3), gamma(1), delta(1), epsilon(1). CF(0) has three main subunits: a, b and c.

Its subcellular location is the cell membrane. Produces ATP from ADP in the presence of a proton gradient across the membrane. The gamma chain is believed to be important in regulating ATPase activity and the flow of protons through the CF(0) complex. The polypeptide is ATP synthase gamma chain (Listeria welshimeri serovar 6b (strain ATCC 35897 / DSM 20650 / CCUG 15529 / CIP 8149 / NCTC 11857 / SLCC 5334 / V8)).